A 144-amino-acid chain; its full sequence is Large ribosomal subunit protein uL15 (144 aa).

The tract at residues 1 to 53 is disordered; that stretch reads MRLNTLSPADGSKHAPKRLGRGIGSGLGKTGGRGHKGQNSRSGGGVRRGFEGG. Residues 21–31 show a composition bias toward gly residues; that stretch reads RGIGSGLGKTG.

It belongs to the universal ribosomal protein uL15 family. As to quaternary structure, part of the 50S ribosomal subunit.

Functionally, binds to the 23S rRNA. The polypeptide is Large ribosomal subunit protein uL15 (Erwinia tasmaniensis (strain DSM 17950 / CFBP 7177 / CIP 109463 / NCPPB 4357 / Et1/99)).